Reading from the N-terminus, the 474-residue chain is Alginate biosynthesis protein AlgX (474 aa).

The N-terminal stretch at 1-26 is a signal peptide; it reads MKTRTSRLFRLSALAAGLCLAQAALA. Positions 27–347 are SGNH hydrolase-like domain; it reads ADPGAAPSYQ…QAMPLVDNGC (321 aa). Residues cysteine 44 and cysteine 229 are joined by a disulfide bond. Aspartate 174 is a catalytic residue. Histidine 176 serves as the catalytic Proton acceptor. Serine 269 serves as the catalytic Nucleophile. Cysteine 347 and cysteine 460 are oxidised to a cystine. A CBM domain region spans residues 348 to 474; it reads SGRKTVLSRK…AKASQSVAGR (127 aa).

This sequence belongs to the AlgX family. Monomer. Interacts with AlgK and MucD.

Its subcellular location is the periplasm. Its pathway is glycan biosynthesis; alginate biosynthesis. In terms of biological role, plays two roles in the biosynthesis of the exopolysaccharide alginate: protects alginate from degradation as the polymer traverses the periplasm, and also plays a role in its O-acetylation. Acetylation of alginate causes the cells in the biofilm to adhere better to lung epithelium, form microcolonies, and resist the effects of the host immune system and/or antibiotics. Displays a low acetylesterase activity in vitro using a pseudosubstrate, 3-carboxyumbelliferyl acetate. Probably has acetyltransferase activity in vivo. The sequence is that of Alginate biosynthesis protein AlgX (algX) from Pseudomonas aeruginosa (strain ATCC 15692 / DSM 22644 / CIP 104116 / JCM 14847 / LMG 12228 / 1C / PRS 101 / PAO1).